Reading from the N-terminus, the 464-residue chain is 3-isopropylmalate dehydratase large subunit (464 aa).

The [4Fe-4S] cluster site is built by C337, C397, and C400.

This sequence belongs to the aconitase/IPM isomerase family. LeuC type 1 subfamily. As to quaternary structure, heterodimer of LeuC and LeuD. The cofactor is [4Fe-4S] cluster.

The enzyme catalyses (2R,3S)-3-isopropylmalate = (2S)-2-isopropylmalate. It functions in the pathway amino-acid biosynthesis; L-leucine biosynthesis; L-leucine from 3-methyl-2-oxobutanoate: step 2/4. In terms of biological role, catalyzes the isomerization between 2-isopropylmalate and 3-isopropylmalate, via the formation of 2-isopropylmaleate. This Bacillus cereus (strain AH820) protein is 3-isopropylmalate dehydratase large subunit.